The primary structure comprises 1048 residues: Self-sufficient cytochrome P450 monooxygenase CYP505E4 (1048 aa).

Heme is bound at residue cysteine 405. Positions 499-640 constitute a Flavodoxin-like domain; the sequence is VSFFYGSNSG…DLEVWEETNL (142 aa). FMN-binding positions include 505–509 and 584–616; these read SNSGT and VFGCGHQDWTKTFYRIPILIDNLMYKAGATRLA. In terms of domain architecture, FAD-binding FR-type spans 678–906; the sequence is RDLIEAKVTA…RPAKDAFHLP (229 aa).

It in the N-terminal section; belongs to the cytochrome P450 family. Requires FAD as cofactor. It depends on FMN as a cofactor. Heme is required as a cofactor.

It carries out the reaction 2 oxidized [cytochrome P450] + NADPH = 2 reduced [cytochrome P450] + NADP(+) + H(+). It catalyses the reaction an organic molecule + reduced [NADPH--hemoprotein reductase] + O2 = an alcohol + oxidized [NADPH--hemoprotein reductase] + H2O + H(+). The enzyme catalyses dodecanoate + reduced [NADPH--hemoprotein reductase] + O2 = 5-hydroxydodecanoate + oxidized [NADPH--hemoprotein reductase] + H2O + H(+). The catalysed reaction is tetradecanoate + reduced [NADPH--hemoprotein reductase] + O2 = 7-hydroxytetradecanoate + oxidized [NADPH--hemoprotein reductase] + H2O + H(+). It carries out the reaction dodecan-1-ol + reduced [NADPH--hemoprotein reductase] + O2 = 1,5-dodecanediol + oxidized [NADPH--hemoprotein reductase] + H2O + H(+). It catalyses the reaction dodecan-1-ol + reduced [NADPH--hemoprotein reductase] + O2 = 1,4-dodecanediol + oxidized [NADPH--hemoprotein reductase] + H2O + H(+). The enzyme catalyses dodecan-1-ol + reduced [NADPH--hemoprotein reductase] + O2 = 1,6-dodecanediol + oxidized [NADPH--hemoprotein reductase] + H2O + H(+). Self-sufficient cytochrome P450 monooxygenase that catalyzes the regioselective in-chain hydroxylation of alkanes, fatty alcohols, and fatty acids at the omega-7 position. Performs hydroxylation of C10-C16 n-alkanes and C12 and C14 fatty alcohols; and thereby enables the one step biocatalytic synthesis of rare alcohols such as 5-dodecanol and 7-tetradecanol. Converts 1-dodecanol into 1,5-dodecanediol as major product with very little sub-terminally hydroxylated products with the 1,4-dodecanediol and 1,6-dodecanediol more abundant. Converts dodecanoic acid to 5-hydroxydodecanoic acid which can be further converted into delta-dodecalactone by lactonization of the 5-hydroxy acid at low pH. Also gives sub-terminal hydroxylation of dodecanoic acid with 9-hydroxydodecanoic acid being the second most abundant product. This is Self-sufficient cytochrome P450 monooxygenase CYP505E4 from Penicillium expansum (Blue mold rot fungus).